The sequence spans 104 residues: MYAIIKNGGKQYKVKEDEVVKLEKFDLGIGEKVEFDTVLMGQTAAGEVKIGAPTVAGAKVVGEVVEQGRHKKVKIMKFRRRKHSMKQQGHRQYFTAVKVSSISL.

It belongs to the bacterial ribosomal protein bL21 family. In terms of assembly, part of the 50S ribosomal subunit. Contacts protein L20.

Its function is as follows. This protein binds to 23S rRNA in the presence of protein L20. The chain is Large ribosomal subunit protein bL21 from Francisella tularensis subsp. tularensis (strain FSC 198).